A 355-amino-acid chain; its full sequence is MTEAIIDLKDIAVTFDDGHQVVHAVQDVNLQIQTGDIYGIIGYSGAGKSTLVRVINLLQSPTTGQVVVNGQALQTLSPAALRQARKHVGMIFQHFNLMQSRTVMGNVIYPLLGQKISKQNRRAKALRLLKLVGLTDYAQTYPDKLSGGQKQRVAIARALVTDPQILISDEATSALDPKTTTAILELLQRVNRELGITIVLITHEMQVIKSICHHVAVMADGRIIERGPVAEVFTAPKAPLTVDFVETSTNVRAAIQRITKTIKLSELAAGQELIAFKFVGQSTKQGIVSQLSQTLGVDVNILFANIDQIDGQNVGDMIAIITGDLTAFNAAVTNMSAQGVHTRIINEEVVKGMVD.

The 240-residue stretch at 6–245 folds into the ABC transporter domain; sequence IDLKDIAVTF…PKAPLTVDFV (240 aa). 42-49 serves as a coordination point for ATP; the sequence is GYSGAGKS.

Belongs to the ABC transporter superfamily. Methionine importer (TC 3.A.1.24) family. In terms of assembly, the complex is composed of two ATP-binding proteins (MetN), two transmembrane proteins (MetI) and a solute-binding protein (MetQ).

It is found in the cell membrane. It carries out the reaction L-methionine(out) + ATP + H2O = L-methionine(in) + ADP + phosphate + H(+). The catalysed reaction is D-methionine(out) + ATP + H2O = D-methionine(in) + ADP + phosphate + H(+). Functionally, part of the ABC transporter complex MetNIQ involved in methionine import. Responsible for energy coupling to the transport system. In Lactiplantibacillus plantarum (strain ATCC BAA-793 / NCIMB 8826 / WCFS1) (Lactobacillus plantarum), this protein is Methionine import ATP-binding protein MetN 1.